A 601-amino-acid chain; its full sequence is Protein NRT1/ PTR FAMILY 4.4 (601 aa).

The next 2 helical transmembrane spans lie at 44–64 (AALFVLGFQAFEMMAIAAVGN) and 82–102 (ANLVTNFIGTVFLLSLLGGFL). Residue Thr112 is modified to Phosphothreonine. Transmembrane regions (helical) follow at residues 113–133 (MLVFGVIEISGFILLSVQAHL), 160–180 (TLYTALCLVALGSGCLKPNII), 198–218 (FFNAAYFAFSMGQLIALTLLV), 228–248 (VGFGVSAAVMAAGMISLVAGT), 337–357 (ILLSVIPIFACTIIFNTILAQ), 386–406 (AIPYIILIFFVPLYETFFVPL), 420–440 (LQRIGTGLFLATFSMVAAALV), 453–473 (VMLSIFWIAPQFLIFGLSEMF), 493–513 (FLTAMTYCSYSFGFYLSSVLV), and 544–564 (HFYWLLASLSFINFFNYLFWS).

Belongs to the major facilitator superfamily. Proton-dependent oligopeptide transporter (POT/PTR) (TC 2.A.17) family. Expressed in shoots, roots and stems.

The protein resides in the membrane. This Arabidopsis thaliana (Mouse-ear cress) protein is Protein NRT1/ PTR FAMILY 4.4 (NPF4.4).